Reading from the N-terminus, the 114-residue chain is UPF0212 protein Mbur_0968 (114 aa).

It belongs to the UPF0212 family.

The protein is UPF0212 protein Mbur_0968 of Methanococcoides burtonii (strain DSM 6242 / NBRC 107633 / OCM 468 / ACE-M).